The primary structure comprises 1891 residues: TATA-binding protein-associated factor mot1 (1891 aa).

Residues 30–68 form an HEAT 1 repeat; that stretch reads PDELFNLLGRILPYLRSKSWDTRAAAAKAIGLIVANADT. Disordered regions lie at residues 184–216, 241–283, and 295–316; these read FVAS…LSKR, LSSR…LDRS, and FKGA…EGPN. Residues 264-275 show a composition bias toward basic and acidic residues; the sequence is ENGEERNGDSKP. 2 HEAT repeats span residues 473–511 and 569–606; these read SKLM…EFVK and SSFG…LEGE. Residues 699-710 show a composition bias toward low complexity; the sequence is SAAAPARSSPAS. Residues 699–740 are disordered; it reads SAAAPARSSPASNTPEGTKGRRRKSEKKEAPPPSAHNVDGHM. HEAT repeat units lie at residues 957 to 996, 1139 to 1177, 1181 to 1216, and 1219 to 1257; these read PKKP…YYTT, YPWV…VITV, TMLV…VMED, and LPYV…LVPL. The Helicase ATP-binding domain occupies 1316–1489; sequence AFLNRYNLHG…WSLFDFLMPG (174 aa). Position 1329-1336 (1329-1336) interacts with ATP; that stretch reads DDMGLGKT. Residues 1440 to 1443 carry the DEAH box motif; that stretch reads DEGH. One copy of the HEAT 8 repeat lies at 1526-1565; that stretch reads EALHKQVLPFLLRRLKEEVLNDLPPKIIQNYYCDPSELQR. One can recognise a Helicase C-terminal domain in the interval 1663–1813; the sequence is DLSGASYVSP…STVVNQQNAG (151 aa).

Belongs to the SNF2/RAD54 helicase family. In terms of assembly, forms the NCT transcriptional regulatory complex with nctA and nctB.

The protein resides in the nucleus. In terms of biological role, regulates transcription in association with TATA binding protein (TBP). Removes TBP from the TATA box via its C-terminal ATPase activity. Both transcription activation and repression require its ATPase activity. Part of the NCT transcriptional regulatory complex that acts as a key regulator of ergosterol biosynthesis and the azole exporter cdr1B. The NCT complex binds the promoters of genes linked to azole susceptibility, and especially represses the expression of cdr1B transporter. The chain is TATA-binding protein-associated factor mot1 from Aspergillus fumigatus (strain CBS 144.89 / FGSC A1163 / CEA10) (Neosartorya fumigata).